A 293-amino-acid chain; its full sequence is MPWIQLRINTNSDDAETISDLLMEEGAVSITFEDGKDTPIFEPKLGETPLWQDTVVVALFEADTDLAPTIEMLKTLPFLGEHFSHKIEQIEDKDWVREWMDNYHPIQFGKRLWICPSWREVPDPSAVNVILDPGLAFGTGTHPTTALCLEWLDSLDLSNEEVIDFGCGSGILAVAALKLGAKKVTGIDIDYQAIEASKANAERNDVADQLALYLPEDQPADLKADVLVANILAGPLRELAPLIAERVKSGGKLALSGLLKEQAQEISDFYSQWFDMDEAAHKEDWSRLTGKRK.

S-adenosyl-L-methionine is bound by residues Thr145, Gly166, Asp188, and Asn230.

Belongs to the methyltransferase superfamily. PrmA family.

Its subcellular location is the cytoplasm. The enzyme catalyses L-lysyl-[protein] + 3 S-adenosyl-L-methionine = N(6),N(6),N(6)-trimethyl-L-lysyl-[protein] + 3 S-adenosyl-L-homocysteine + 3 H(+). Methylates ribosomal protein L11. This is Ribosomal protein L11 methyltransferase from Shewanella sp. (strain ANA-3).